The primary structure comprises 131 residues: Profilin-2 (131 aa).

A disulfide bond links Cys13 and Cys115. The short motif at 81-97 is the Involved in PIP2 interaction element; that stretch reads AVIRGKKGSGGITVKKT. Phosphothreonine is present on Thr111.

It belongs to the profilin family. Occurs in many kinds of cells as a complex with monomeric actin in a 1:1 ratio. Phosphorylated by MAP kinases. In terms of tissue distribution, pollen specific.

The protein resides in the cytoplasm. Its subcellular location is the cytoskeleton. Functionally, binds to actin and affects the structure of the cytoskeleton. At high concentrations, profilin prevents the polymerization of actin, whereas it enhances it at low concentrations. By binding to PIP2, it inhibits the formation of IP3 and DG. This is Profilin-2 (PRO2) from Zea mays (Maize).